Consider the following 160-residue polypeptide: FMRFamide-like neuropeptides 13 (160 aa).

The signal sequence occupies residues 1–17 (MMTSLLTISMFVVAIQA). A propeptide spanning residues 18-43 (FDSSEIRMLDEQYDTKNPFFQFLENS) is cleaved from the precursor. Phenylalanine amide occurs at positions 60, 73, 85, 98, 110, 123, 135, 146, and 157.

Belongs to the FARP (FMRFamide related peptide) family. As to expression, expressed in the ASE sensory neurons, the DD motor neurons, the 15, M3 and M5 cholinergic pharyngeal motoneurons, and the ASG, ASK and BAG neurons.

The protein localises to the secreted. Its function is as follows. Probable FMRFamide-like neuropeptides. Binds to neuronal receptors such as dmsr-1 to promote sleep in response to cellular stress also known as stress-induced sleep (SIS). Plays a role in behaviors associated with SIS, acting in concert with the FMRFamide related peptide, flp-24 and neuropeptide-like protein nlp-8. In terms of biological role, AADGAPLIRF-amide: Inhibits muscle tension in somatic muscle. Acts as a ligand for the npr-22 receptor in vitro. Acts as a ligand for isoform a of the dmsr-1 G-protein coupled receptor in vitro. APEASPFIRF-amide: Inhibits muscle tension in somatic muscle. Potent inhibitor of the activity of the dissected pharyngeal myogenic muscle system. Acts as a ligand for isoform a of the dmsr-1 G-protein coupled receptor in vitro. Functionally, acts as a ligand for the npr-22 receptor in vitro. Acts as a ligand for isoform a of the dmsr-1 G-protein coupled receptor in vitro. Its function is as follows. Acts as a ligand for isoform a of the dmsr-1 G-protein coupled receptor in vitro. This chain is FMRFamide-like neuropeptides 13, found in Caenorhabditis elegans.